The chain runs to 315 residues: MHCIRPIKAGFNATGDIVYSSKKISKELASFAFPCRKCIPCRLNMAREKAIRAYHESQMWDDNIFLTLTYDDEHLKSDRLQWIDFDLFIKRLNEKLNRGLSKENRRPLPYMVTGEYGDKTKRPHWHVLIFNFRPDDAKKHYVTELGEQVYTSEFIRDLWTHGNIEFGSVTLDSASYVARYAAKKLAHGNDQDHDYHPIHNTSKKHAIGKKWIEKYHEQTFSRGYVVLPNGSQGPIPRYYQDWYKKNHPEKWMEYDAKVKLKSKELAEMQSRKDQLDDFANFINYRGGTNYPLSRTQVKLAILKSKFKQLQEKLKL.

Residues Tyr-176 and Tyr-180 each act as O-(5'-phospho-DNA)-tyrosine intermediate in the active site. Residues 253 to 315 are a coiled coil; the sequence is EYDAKVKLKS…FKQLQEKLKL (63 aa).

Belongs to the microviridae Rep protein family.

It carries out the reaction ATP + (deoxyribonucleotide)n-3'-hydroxyl + 5'-phospho-(deoxyribonucleotide)m = (deoxyribonucleotide)n+m + AMP + diphosphate.. In terms of biological role, plays an essential role in viral DNA replication. Binds the origin of replication and cleaves the dsDNA replicative form I (RFI) and becomes covalently bound to it via phosphotyrosine bond, generating the dsDNA replicative form II (RFII). In turn, viral DNA replication initiates at the 3'-OH of the cleavage site. After one round of rolling circle synthesis, protein VP4 is linked to the newly synthesized ssDNA and joins the ends of the displaced strand to generate a circular single-stranded molecule ready to be packed into a virion. This is Replication-associated protein VP4 from Bdellovibrio bacteriovorus (Bacteriophage phiMH2K).